The sequence spans 161 residues: Photosystem II extrinsic protein V (161 aa).

Residues 1-25 (MKKFFISVVFIVLLTFTTFINSATA) form the signal peptide. Residues cysteine 61, cysteine 64, histidine 65, and histidine 116 each contribute to the heme c site.

This sequence belongs to the cytochrome c family. PsbV subfamily. As to quaternary structure, PSII is composed of 1 copy each of membrane proteins PsbA, PsbB, PsbC, PsbD, PsbE, PsbF, PsbH, PsbI, PsbJ, PsbK, PsbL, PsbM, PsbT, PsbX, PsbY, PsbZ, Psb30/Ycf12, peripheral proteins PsbO, CyanoQ (PsbQ), PsbU, PsbV and a large number of cofactors. It forms dimeric complexes. Requires heme c as cofactor.

Its subcellular location is the cellular thylakoid membrane. In terms of biological role, one of the extrinsic, lumenal subunits of photosystem II (PSII). PSII is a light-driven water plastoquinone oxidoreductase, using light energy to abstract electrons from H(2)O, generating a proton gradient subsequently used for ATP formation. The extrinsic proteins stabilize the structure of photosystem II oxygen-evolving complex (OEC), the ion environment of oxygen evolution and protect the OEC against heat-induced inactivation. Low-potential cytochrome c that plays a role in the OEC of PSII. In Trichodesmium erythraeum (strain IMS101), this protein is Photosystem II extrinsic protein V.